The following is a 560-amino-acid chain: Glucose-6-phosphate isomerase, cytosolic (560 aa).

Residue Ala-2 is modified to N-acetylalanine. The active-site Proton donor is the Glu-361. Catalysis depends on residues His-392 and Lys-517.

The protein belongs to the GPI family. As to quaternary structure, homodimer.

It localises to the cytoplasm. The catalysed reaction is alpha-D-glucose 6-phosphate = beta-D-fructose 6-phosphate. It participates in carbohydrate degradation; glycolysis; D-glyceraldehyde 3-phosphate and glycerone phosphate from D-glucose: step 2/4. Its activity is regulated as follows. Inhibited by glycerol-3-P (G3P). The polypeptide is Glucose-6-phosphate isomerase, cytosolic (PGIC) (Arabidopsis thaliana (Mouse-ear cress)).